We begin with the raw amino-acid sequence, 7073 residues long: Replicase polyprotein 1ab (7073 aa).

Over 1–2202 the chain is Cytoplasmic; sequence MESLVLGVNE…NYVKSPKFSK (2202 aa). The region spanning 12-127 is the CoV Nsp1 globular domain; that stretch reads THVQLSLPVL…YRNVLLRKNG (116 aa). Residues 148-179 form the BetaCoV Nsp1 C-terminal domain; it reads ELGTDPIEDYEQNWNTKHGSGALRELTRELNG. The CoV Nsp2 N-terminal domain occupies 183-456; that stretch reads TRYVDNNFCG…NEDLLEILSR (274 aa). Zn(2+)-binding residues include Cys200, Cys231, His234, His236, Cys323, Cys326, Cys341, Cys344, Cys370, Cys373, His382, and Cys416. The segment at 200–236 is C2H2; it reads CIKDFLARAGKSMCTLSEQLDYIESKRGVYCCRDHEH. Positions 323-344 are C4; it reads CNHCDEVSWQTCDFLKATCEHC. Residues 370-416 form a C2HC region; sequence CPACQDPEIGPEHSVADYHNHSNIETRLRKGGRTRCFGGCVFAYVGC. The CoV Nsp2 middle domain occupies 458 to 688; sequence RVNINIVGDF…IDVVNKALEM (231 aa). One can recognise a CoV Nsp2 C-terminal domain in the interval 690 to 818; it reads IDQVTIAGAK…TNNVFRLKGG (129 aa). The 109-residue stretch at 822-930 folds into the Ubiquitin-like 1 domain; that stretch reads KGVTFGEDTV…MYCSFYPPDE (109 aa). Disordered regions lie at residues 972–1003 and 1175–1198; these read RVEE…EEPV and RVEA…KSVV. Residues 974-999 show a composition bias toward acidic residues; sequence EEEEEEDWLDDTTEQSEIEPEPEPTP. One can recognise a Macro 1 domain in the interval 1003–1169; the sequence is VNQFTGYLKL…LYEQVVMDYL (167 aa). 2 Macro domains span residues 1207–1335 and 1343–1470; these read KIKA…LPSE and ILGT…TSSS. Residues 1472–1538 form the DPUP domain; sequence TSEEHFVETV…SLDKLKSLLS (67 aa). One can recognise a Ubiquitin-like 2 domain in the interval 1542–1597; that stretch reads VKTIKVFTTVDNTNLHTQLVDMSMTYGQQFGPTYLDGADVTKIKPHVNHEGKTFFV. Residues 1611–1875 enclose the Peptidase C16 domain; that stretch reads YYHTLDESFL…YTEIEPKLDG (265 aa). The active-site For PL-PRO activity is Cys1651. 4 residues coordinate Zn(2+): Cys1729, Cys1732, Cys1764, and Cys1766. The segment at 1729-1766 adopts a C4-type zinc-finger fold; it reads CKHCGQKTTTLTGVEAVMYMGTLSYDNLKTGVSIPCVC. Residues His1812 and Asp1826 each act as for PL-PRO activity in the active site. The 111-residue stretch at 1888 to 1998 folds into the Nucleic acid-binding domain; the sequence is PIDLVPTQPL…CLWSTKPVDT (111 aa). Residues 2023–2132 enclose the G2M domain; that stretch reads PTSEEVVENP…LGQAAITTSN (110 aa). The helical transmembrane segment at 2203–2223 threads the bilayer; that stretch reads LFTIAMWLLLLSICLGSLICV. The interval 2203 to 2324 is HD1; it reads LFTIAMWLLL…FYLLGLSAIM (122 aa). The 3Ecto domain maps to 2224 to 2294; that stretch reads TAAFGVLLSN…QVTISSYKLD (71 aa). The Lumenal segment spans residues 2224–2303; it reads TAAFGVLLSN…DLTILGLAAE (80 aa). Disulfide bonds link Cys2240–Cys2268 and Cys2259–Cys2265. Residues 2304 to 2324 traverse the membrane as a helical segment; it reads WVLAYMLFTKFFYLLGLSAIM. The Cytoplasmic portion of the chain corresponds to 2325–2754; it reads QVFFGYFASH…TCFKLMLKAT (430 aa). Residues 2372–2462 are Y1; sequence KSYVHIMDGC…QFKRPINPTD (91 aa). Residues 2372–2740 enclose the CoV Nsp3 Y domain; sequence KSYVHIMDGC…ITTKISLKGG (369 aa). Zn(2+)-binding residues include His2376, Cys2381, Cys2386, Cys2389, Cys2422, His2425, Cys2429, and Cys2432. Positions 2376–2389 are ZF1; it reads HIMDGCTSSTCMMC. The tract at residues 2422 to 2432 is ZF2; it reads CKTHNWNCLNC. A Y2 region spans residues 2463 to 2557; the sequence is QSSYIVDSVA…LLDQALVSDV (95 aa). The interval 2463 to 2740 is coV-Y; it reads QSSYIVDSVA…ITTKISLKGG (278 aa). The interval 2558–2639 is Y3; that stretch reads GDSTEVSVKM…ECLKLSHHSD (82 aa). Residues 2640-2740 are Y4; sequence LEVTGDSCNN…ITTKISLKGG (101 aa). Residues 2755–2775 traverse the membrane as a helical segment; the sequence is LLCVLAALVCYIVMPVHTLSI. Residues 2755-3125 form an HD2 region; the sequence is LLCVLAALVC…WITAIYVFCI (371 aa). The Lumenal portion of the chain corresponds to 2776-3021; that stretch reads HDGYTNEIIG…VQPVGALDVS (246 aa). Residues 3022 to 3042 form a helical membrane-spanning segment; that stretch reads ASVVAGGIIAILVTCAAYYFM. At 3043 to 3076 the chain is on the cytoplasmic side; that stretch reads KFRRVFGEYNHVVAANALLFLMSFTILCLVPAYS. Residues 3077-3097 traverse the membrane as a helical segment; sequence FLPGVYSVFYLYLTFYFTNDV. Over 3098–3104 the chain is Lumenal; the sequence is SFLAHLQ. The helical transmembrane segment at 3105–3125 threads the bilayer; it reads WFAMFSPIVPFWITAIYVFCI. Over 3126 to 3563 the chain is Cytoplasmic; sequence SLKHCHWFFN…KGTHHWMLLT (438 aa). One can recognise a Nsp4C domain in the interval 3142-3240; sequence VMFNGVTFST…QTSITSAVLQ (99 aa). The region spanning 3241–3546 is the Peptidase C30 domain; that stretch reads SGFRKMAFPS…VRQCSGVTFQ (306 aa). Catalysis depends on for 3CL-PRO activity residues His3281 and Cys3385. Residues 3564 to 3584 traverse the membrane as a helical segment; that stretch reads FLTSLLILVQSTQWSLFFFVY. Positions 3564–3776 are HD3; it reads FLTSLLILVQ…CCCYFGLFCL (213 aa). Glu3585 is a topological domain (lumenal). A helical transmembrane segment spans residues 3586-3606; sequence NAFLPFTLGIMAIAACAMLLV. At 3607-3611 the chain is on the cytoplasmic side; that stretch reads KHKHA. Residues 3612-3632 traverse the membrane as a helical segment; it reads FLCLFLLPSLATVAYFNMVYM. Topologically, residues 3633-3657 are lumenal; sequence PASWVMRIMTWLELADTSLSGYRLK. Residues 3658 to 3678 form a helical membrane-spanning segment; that stretch reads DCVMYASALVLLILMTARTVY. The Cytoplasmic segment spans residues 3679–3727; it reads DDAARRVWTLMNVITLVYKVYYGNALDQAISMWALVISVTSNYSGVVTT. The chain crosses the membrane as a helical span at residues 3728 to 3748; it reads IMFLARAIVFVCVEYYPLLFI. Residues 3749 to 3755 lie on the Lumenal side of the membrane; that stretch reads TGNTLQC. A helical membrane pass occupies residues 3756 to 3776; the sequence is IMLVYCFLGYCCCCYFGLFCL. The Cytoplasmic segment spans residues 3777–7073; that stretch reads LNRYFRLTLG…VVSSDILVNN (3297 aa). In terms of domain architecture, RdRp Nsp7 cofactor spans 3837 to 3919; that stretch reads SKMSDVKCTS…EMLDNRATLQ (83 aa). The region spanning 3920–4117 is the RdRp Nsp8 cofactor domain; that stretch reads AIASEFSSLP…LRANSAVKLQ (198 aa). The Nsp9 ssRNA-binding domain maps to 4118 to 4230; the sequence is NNELSPVALR…GSLAATVRLQ (113 aa). Residues 4231-4369 form the ExoN/MTase coactivator domain; it reads AGNATEVPAN…CDQLREPLMQ (139 aa). Zn(2+)-binding residues include Cys4304, Cys4307, His4313, Cys4320, Cys4347, Cys4350, Cys4358, and Cys4360. 2 zinc fingers span residues 4304–4320 and 4347–4360; these read CLYC…KGFC and CTVC…GCSC. Residues 4376-4630 enclose the NiRAN domain; the sequence is FLNRVCGVSA…AAESHMDADL (255 aa). The Mn(2+) site is built by Asn4578 and Asp4587. One can recognise a Nsp12 Interface domain in the interval 4635-4733; the sequence is IKWDLLKYDF…HNQDVNLHSS (99 aa). Zn(2+) contacts are provided by His4664, Cys4670, Cys4675, Cys4679, and Cys4856. Residues 4734 to 5301 enclose the Nsp12 RNA-dependent RNA polymerase domain; that stretch reads RLSFKELLVY…AMYTPHTVLQ (568 aa). A rdRp Fingers N-ter region spans residues 4736–4950; that stretch reads SFKELLVYAA…HQKLLKSIAA (215 aa). The rdRp Palm N-ter stretch occupies residues 4951-4989; that stretch reads TRGATVVIGTSKFYGGWHNMLKTVYSDVETPHLMGWDYP. Residues 4981–5143 enclose the RdRp catalytic domain; sequence PHLMGWDYPK…CYNSNYAAQG (163 aa). The rdRp Fingers C-ter stretch occupies residues 4990 to 5048; it reads KCDRAMPNMLRIMASLVLARKHNTCCNLSHRFYRLANECAQVLSEMVMCGGSLYVKPGG. Residues His5011, Cys5014, and Cys5015 each contribute to the Zn(2+) site. A rdRp Palm C-ter region spans residues 5049–5184; it reads TSSGDATTAY…TKGPHEFCSQ (136 aa). Catalysis depends on residues Ser5128, Asp5129, and Asp5130. A rdRp Thumb region spans residues 5185–5301; sequence HTMLVKQGDD…AMYTPHTVLQ (117 aa). One can recognise a CV ZBD domain in the interval 5302–5414; the sequence is AVGACVLCNS…TDFNAIATCD (113 aa). Residues Cys5306, Cys5309, Cys5317, Cys5320, Cys5327, Cys5330, His5334, His5340, Cys5351, Cys5356, Cys5373, and His5376 each contribute to the Zn(2+) site. Residues 5558 to 5739 form the (+)RNA virus helicase ATP-binding domain; sequence NISDEFSSNV…MKTIGPDMFL (182 aa). 5583–5590 provides a ligand contact to ATP; the sequence is GPPGTGKS. The (+)RNA virus helicase C-terminal domain maps to 5740 to 5909; the sequence is GTCRRCPAEI…TLQAENVTGL (170 aa). The region spanning 5974-6189 is the ExoN domain; the sequence is MFITREEAIR…RCLAVHECFV (216 aa). Active-site residues include Asp5992, Glu5994, and Glu6093. The Mg(2+) site is built by Glu5994 and Glu6093. Cys6109, Cys6112, Cys6128, His6131, His6159, Cys6163, and His6166 together coordinate Zn(2+). Residues His6170 and Asp6175 contribute to the active site. Residues His6170 and Asp6175 each contribute to the Mg(2+) site. Zn(2+) is bound at residue Cys6181. Positions 6198 to 6429 constitute an N7-MTase domain; that stretch reads YPIIGDELRV…NLWNTFTRLQ (232 aa). Position 6233–6239 (6233–6239) interacts with S-adenosyl-L-methionine; it reads DIGNPKA. A gpppA-binding region spans residues 6316-6330; it reads CDGGSLYVNKHAFHT. Cys6354, Cys6375, Cys6386, and His6389 together coordinate Zn(2+). The Nsp15 N-terminal oligomerization domain occupies 6430–6490; that stretch reads SLENVAYNVV…NVAFELWAKR (61 aa). Positions 6491–6616 constitute an AV-Nsp11N/CoV-Nsp15M domain; it reads NIKPVPEIKI…YFKKVDGIIQ (126 aa). In terms of domain architecture, NendoU spans 6633 to 6772; that stretch reads KPRSQMETDF…KDGHVETFYP (140 aa). Catalysis depends on residues His6663, His6678, Lys6718, Lys6821, Asp6905, Lys6945, and Glu6978. The 295-residue stretch at 6777–7071 folds into the Nidovirus-type SAM-dependent 2'-O-MTase domain; it reads SQAWQPGVAM…RVVVSSDILV (295 aa).

It belongs to the coronaviruses polyprotein 1ab family. In terms of assembly, interacts with host PHB and PHB2. As to quaternary structure, interacts with papain-like protease nsp3 and non-structural protein 6. Monomer. Homodimer. Only the homodimer shows catalytic activity. In terms of assembly, interacts with nsp8 and nsp12 to form the replication-transcription complex (RTC): nsp12, nsp7, two subunits of nsp8, and up to two subunits of nsp13. Eight copies of nsp7 and eight copies of nsp8 assemble to form a heterohexadecamer dsRNA-encircling ring structure. As to quaternary structure, interacts with nsp7, nsp13 and nsp12 to form the replication-transcription complex (RTC): nsp12, nsp7, two subunits of nsp8, and up to two subunits of nsp13. Eight copies of nsp7 and eight copies of nsp8 assemble to form a heterohexadecamer dsRNA-encircling ring structure. Interacts with ORF6 protein. Homodimer. Interacts with nsp12. In terms of assembly, homododecamer. Interacts with proofreading exoribonuclease nsp14 and 2'-O-methyltransferase nsp16; these interactions enhance nsp14 and nsp16 enzymatic activities. As to quaternary structure, interacts with nsp7 and nsp8 to form the replication-transcription complex (RTC): nsp12, nsp7, two subunits of nsp8, and up to two subunits of nsp13. Interacts with nsp9. Interacts with nsp8 to form the replication-transcription complex (RTC): nsp12, nsp7, two subunits of nsp8, and up to two subunits of nsp13. In terms of assembly, interacts (via N-terminus) with host DDX1. Interacts with non-structural protein 10. As to quaternary structure, homohexamer. Interacts with nsp10. The cofactor is Zn(2+). Mn(2+) is required as a cofactor. It depends on Mg(2+) as a cofactor. In terms of processing, specific enzymatic cleavages in vivo by its own proteases yield mature proteins. 3C-like proteinase nsp5 liberates nsps 6-16 from the polyprotein. Papain-like and 3C-like proteinases are autocatalytically processed.

The protein localises to the host cytoplasm. It is found in the host endosome. Its subcellular location is the host membrane. It localises to the host Golgi apparatus. The protein resides in the host perinuclear region. The protein localises to the host endoplasmic reticulum. It is found in the host endoplasmic reticulum-Golgi intermediate compartment. It carries out the reaction RNA(n) + a ribonucleoside 5'-triphosphate = RNA(n+1) + diphosphate. The catalysed reaction is ATP + H2O = ADP + phosphate + H(+). The enzyme catalyses TSAVLQ-|-SGFRK-NH2 and SGVTFQ-|-GKFKK the two peptides corresponding to the two self-cleavage sites of the SARS 3C-like proteinase are the two most reactive peptide substrates. The enzyme exhibits a strong preference for substrates containing Gln at P1 position and Leu at P2 position.. It catalyses the reaction Thiol-dependent hydrolysis of ester, thioester, amide, peptide and isopeptide bonds formed by the C-terminal Gly of ubiquitin (a 76-residue protein attached to proteins as an intracellular targeting signal).. It carries out the reaction a 5'-end (N(7)-methyl 5'-triphosphoguanosine)-ribonucleoside in mRNA + S-adenosyl-L-methionine = a 5'-end (N(7)-methyl 5'-triphosphoguanosine)-(2'-O-methyl-ribonucleoside) in mRNA + S-adenosyl-L-homocysteine + H(+). The catalysed reaction is uridylyl-uridylyl-ribonucleotide-RNA = a 3'-end uridylyl-2',3'-cyclophospho-uridine-RNA + a 5'-end dephospho-ribonucleoside-RNA. The enzyme catalyses a 5'-end (5'-triphosphoguanosine)-ribonucleoside in mRNA + S-adenosyl-L-methionine = a 5'-end (N(7)-methyl 5'-triphosphoguanosine)-ribonucleoside in mRNA + S-adenosyl-L-homocysteine. It catalyses the reaction a 5'-end diphospho-ribonucleoside in mRNA + GTP + H(+) = a 5'-end (5'-triphosphoguanosine)-ribonucleoside in mRNA + diphosphate. Inhibited by Remdesivir (GS-5734). Its function is as follows. Multifunctional protein involved in the transcription and replication of viral RNAs. Contains the proteinases responsible for the cleavages of the polyprotein. Inhibits host translation by interacting with the 40S ribosomal subunit. The nsp1-40S ribosome complex further induces an endonucleolytic cleavage near the 5'UTR of host mRNAs, targeting them for degradation. Viral mRNAs are not susceptible to nsp1-mediated endonucleolytic RNA cleavage thanks to the presence of a 5'-end leader sequence and are therefore protected from degradation. By suppressing host gene expression, nsp1 facilitates efficient viral gene expression in infected cells and evasion from host immune response. May disrupt nuclear pore function by binding and displacing host NUP93. Functionally, may play a role in the modulation of host cell survival signaling pathway by interacting with host PHB and PHB2. Indeed, these two proteins play a role in maintaining the functional integrity of the mitochondria and protecting cells from various stresses. In terms of biological role, responsible for the cleavages located at the N-terminus of the replicase polyprotein. In addition, PL-PRO possesses a deubiquitinating/deISGylating activity and processes both 'Lys-48'- and 'Lys-63'-linked polyubiquitin chains from cellular substrates. Plays a role in host membrane rearrangement that leads to creation of cytoplasmic double-membrane vesicles (DMV) necessary for viral replication. Nsp3, nsp4 and nsp6 together are sufficient to form DMV. Antagonizes innate immune induction of type I interferon by blocking the phosphorylation, dimerization and subsequent nuclear translocation of host IRF3. Also prevents host NF-kappa-B signaling. Its function is as follows. Plays a role in host membrane rearrangement that leads to creation of cytoplasmic double-membrane vesicles (DMV) necessary for viral replication. Alone appears incapable to induce membrane curvature, but together with nsp3 is able to induce paired membranes. Nsp3, nsp4 and nsp6 together are sufficient to form DMV. Cleaves the C-terminus of replicase polyprotein at 11 sites. Recognizes substrates containing the core sequence [ILMVF]-Q-|-[SGACN]. May cleave human NLRP1 in lung epithelial cells, thereby activating the NLRP1 inflammasome pathway. Also able to bind an ADP-ribose-1''-phosphate (ADRP). May cleave host ATP6V1G1 thereby modifying host vacuoles intracellular pH. Functionally, plays a role in host membrane rearrangement that leads to creation of cytoplasmic double-membrane vesicles (DMV) necessary for viral replication. Nsp3, nsp4 and nsp6 together are sufficient to form DMV. Plays a role in the initial induction of autophagosomes from host endoplasmic reticulum. Later, limits the expansion of these phagosomes that are no longer able to deliver viral components to lysosomes. In terms of biological role, forms a hexadecamer with nsp8 (8 subunits of each) that may participate in viral replication by acting as a primase. Alternatively, may synthesize substantially longer products than oligonucleotide primers. Its function is as follows. Forms a hexadecamer with nsp7 (8 subunits of each) that may participate in viral replication by acting as a primase. Alternatively, may synthesize substantially longer products than oligonucleotide primers. Forms a primer, NSP9-pU, which is utilized by the polymerase for the initiation of RNA chains. Interacts with ribosome signal recognition particle RNA (SRP). Together with NSP8, suppress protein integration into the cell membrane, thereby disrupting host immune defenses. Functionally, plays a pivotal role in viral transcription by stimulating both nsp14 3'-5' exoribonuclease and nsp16 2'-O-methyltransferase activities. Therefore plays an essential role in viral mRNAs cap methylation. In terms of biological role, RNA-directed RNA polymerase that catalyzes the transcription of viral genomic and subgenomic RNAs. Acts in complex with nsp7 and nsp8 to transcribe both the minus and positive strands of genomic RNA. The kinase-like NiRAN domain of NSP12 attaches one or more nucleotides to the amino terminus of NSP9, forming a covalent RNA-protein intermediate that serves as transcription/replication primer. Subgenomic RNAs (sgRNAs) are formed by discontinuous transcription: The polymerase has the ability to pause at transcription-regulating sequences (TRS) and jump to the leader TRS, resulting in a major deletion. This creates a series of subgenomic RNAs that are replicated, transcribed and translated. In addition, Nsp12 is a subunit of the viral RNA capping enzyme that catalyzes the RNA guanylyltransferase reaction for genomic and sub-genomic RNAs. Subsequently, the NiRAN domain transfers RNA to GDP, and forms the core cap structure GpppA-RNA. Its function is as follows. Multi-functional protein with a zinc-binding domain in N-terminus displaying RNA and DNA duplex-unwinding activities with 5' to 3' polarity. Activity of helicase is dependent on magnesium. Plays a role in viral RNA synthesis through two distinct activities. The N7-guanine methyltransferase activity plays a role in the formation of the cap structure GpppA-RNA. The proofreading exoribonuclease reduces the sensitivity of the virus to RNA mutagens during replication. This activity acts on both ssRNA and dsRNA in a 3'-5' direction. Functionally, plays a role in viral transcription/replication and prevents the simultaneous activation of host cell dsRNA sensors, such as MDA5/IFIH1, OAS, and PKR. Acts by degrading the 5'-polyuridines generated during replication of the poly(A) region of viral genomic and subgenomic RNAs. Catalyzes a two-step reaction in which a 2'3'-cyclic phosphate (2'3'-cP) is first generated by 2'-O transesterification, which is then hydrolyzed to a 3'-phosphate (3'-P). If not degraded, poly(U) RNA would hybridize with poly(A) RNA tails and activate host dsRNA sensors. In terms of biological role, methyltransferase that mediates mRNA cap 2'-O-ribose methylation to the 5'-cap structure of viral mRNAs. N7-methyl guanosine cap is a prerequisite for binding of nsp16. Therefore plays an essential role in viral mRNAs cap methylation which is essential to evade immune system. This chain is Replicase polyprotein 1ab (rep), found in Severe acute respiratory syndrome coronavirus (SARS-CoV).